The following is a 124-amino-acid chain: Small ribosomal subunit protein uS12 (124 aa).

Asp-90 is subject to 3-methylthioaspartic acid.

The protein belongs to the universal ribosomal protein uS12 family. In terms of assembly, part of the 30S ribosomal subunit. Contacts proteins S8 and S17. May interact with IF1 in the 30S initiation complex.

Its function is as follows. With S4 and S5 plays an important role in translational accuracy. Functionally, interacts with and stabilizes bases of the 16S rRNA that are involved in tRNA selection in the A site and with the mRNA backbone. Located at the interface of the 30S and 50S subunits, it traverses the body of the 30S subunit contacting proteins on the other side and probably holding the rRNA structure together. The combined cluster of proteins S8, S12 and S17 appears to hold together the shoulder and platform of the 30S subunit. The chain is Small ribosomal subunit protein uS12 from Wolbachia pipientis wMel.